A 292-amino-acid chain; its full sequence is 4-hydroxy-tetrahydrodipicolinate synthase (292 aa).

T45 is a pyruvate binding site. Y133 functions as the Proton donor/acceptor in the catalytic mechanism. Residue K161 is the Schiff-base intermediate with substrate of the active site. Residue I203 coordinates pyruvate.

This sequence belongs to the DapA family. Homotetramer; dimer of dimers.

The protein localises to the cytoplasm. It catalyses the reaction L-aspartate 4-semialdehyde + pyruvate = (2S,4S)-4-hydroxy-2,3,4,5-tetrahydrodipicolinate + H2O + H(+). It participates in amino-acid biosynthesis; L-lysine biosynthesis via DAP pathway; (S)-tetrahydrodipicolinate from L-aspartate: step 3/4. Catalyzes the condensation of (S)-aspartate-beta-semialdehyde [(S)-ASA] and pyruvate to 4-hydroxy-tetrahydrodipicolinate (HTPA). The polypeptide is 4-hydroxy-tetrahydrodipicolinate synthase (Salmonella arizonae (strain ATCC BAA-731 / CDC346-86 / RSK2980)).